A 683-amino-acid polypeptide reads, in one-letter code: MADKKNLLLLFDHPTEPVFMDKGGNGTVFDVPASYVTDRYNKMCKKVQRRVSGGFEKNVLVKEIPIPDLSCSMRLGRSEQFSLFLESHRQMACHLIDVFIKMPTVDELQSVAVYARDRVNPVLFNYALSVAMLHRSDTKDLGLPAFAQIFPDRFIDSQMLRTMREESFVVERSAARLPVHSSVKYTASDLDVEHRLWYFREDLGVNLHHWHWHLVYPNTAPDRSIVDKDRRGELFYYMHQQIIARYNAERLCNHMARVQPFNNLEEPIAEGYFPKMDSLVASRAFPPRFDNTRLSDVDRPINQLRVGIDDMKRWRERIYEAIHQGYVLDANHKKIVLDDVKGIDILGNIIESSQLTPNKTLYGDLHNKGHILIAFSHDPTNKHLEYAGVMGDASTAMRDPIFYKWHAFIDNLFQEHKRQLSPYTEEDLTFPDVRVQSIQVESQGQVNRLTTFWQESDVDMSRGLDFVPRGHVLARFTHLQHHPFSYTIEVENSSEATRYGYVRIFLAPKLDDGNATMLLEQQRRMMVELDKFVVTMPPGSHTITRDSTESSVTIPFKRTFRNMDNPGEPQNFLCGCGWPQHMLIPKGRAEGLSFELFVMVSNYEDDKVDQKPEDCECSIAASYCGLRDRLYPDRKSMGFPFDRQPRSGSELLEKFLTPNMCSIEVIISHEARTEKIPELPDHS.

Positions 1-48 (MADKKNLLLLFDHPTEPVFMDKGGNGTVFDVPASYVTDRYNKMCKKVQ) are excised as a propeptide. N-linked (GlcNAc...) asparagine glycosylation is present at N25. The Cu cation site is built by H209, H213, and H239. E351 acts as the Proton acceptor in catalysis. N358 carries N-linked (GlcNAc...) asparagine glycosylation. Positions 366, 370, and 406 each coordinate Cu cation. N-linked (GlcNAc...) asparagine glycosylation is found at N492 and N514. 2 disulfide bridges follow: C574–C617 and C576–C624.

It belongs to the tyrosinase family. It depends on Cu(2+) as a cofactor. In terms of processing, upon activation, a trypsin type protease cleaves prophenol oxidase to yield the active enzyme.

Its subcellular location is the secreted. The catalysed reaction is 2 L-dopa + O2 = 2 L-dopaquinone + 2 H2O. It catalyses the reaction L-tyrosine + O2 = L-dopaquinone + H2O. In terms of biological role, this is a copper-containing oxidase that functions in the formation of pigments such as melanins and other polyphenolic compounds. Catalyzes the rate-limiting conversions of tyrosine to DOPA, DOPA to DOPA-quinone and possibly 5,6 dihydroxyindole to indole-5'6 quinone. The polypeptide is Phenoloxidase 3 (PPO3) (Drosophila erecta (Fruit fly)).